The primary structure comprises 1032 residues: Importin beta-like protein KAP120 (1032 aa).

Ala2 is modified (N-acetylalanine). The Importin N-terminal domain maps to Ala31–Glu103.

The protein belongs to the importin beta family. In terms of assembly, interacts with GTP-bound GSP1 and RFP1. Associates with the nuclear pore complex.

The protein localises to the cytoplasm. It localises to the nucleus. Functionally, functions in nuclear protein import as nuclear transport receptor. Serves as receptor for nuclear localization signals (NLS) in cargo substrates. Thought to mediate docking of the importin/substrate complex to the nuclear pore complex (NPC) through binding to nucleoporin and the complex is subsequently translocated through the pore by an energy requiring, RAN-dependent mechanism. Required for nuclear import of Ho endonuclease and RFP1, and involved in rRNA-processing and assembly or export of 60S ribosomal subunits. In Saccharomyces cerevisiae (strain ATCC 204508 / S288c) (Baker's yeast), this protein is Importin beta-like protein KAP120 (KAP120).